The chain runs to 270 residues: Interleukin-1 alpha (270 aa).

Positions 1–112 (MAKVPDLFED…EVEEEIMKPR (112 aa)) are excised as a propeptide. An N6-acetyllysine modification is found at Lys-82. The nuclear localization signal (NLS) stretch occupies residues 82–86 (KKRRL). Ser-87 bears the Phosphoserine mark. Asn-139 carries N-linked (GlcNAc...) asparagine glycosylation.

It belongs to the IL-1 family. In terms of assembly, monomer. Interacts with TMED10; the interaction mediates the translocation from the cytoplasm into the ERGIC (endoplasmic reticulum-Golgi intermediate compartment) and thereby secretion. Interacts with IL1R1. Interacts with S100A13; this interaction is the first step in the export of IL1A, followed by direct translocation of this complex across the plasma membrane. Post-translationally, acetylated within its nuclear localization sequence, which impacts subcellular localization. In terms of processing, proteolytic processed by CAPN1 in a calcium-dependent manner. Cleavage from 31 kDa precursor to 18 kDa biologically active molecules. Phosphorylated. Phosphorylation greatly enhances susceptibility to digestion and promotes the conversion of pre-IL1A alpha to the biologically active IL1A.

The protein resides in the nucleus. It is found in the cytoplasm. Its subcellular location is the secreted. Its function is as follows. Cytokine constitutively present intracellularly in nearly all resting non-hematopoietic cells that plays an important role in inflammation and bridges the innate and adaptive immune systems. After binding to its receptor IL1R1 together with its accessory protein IL1RAP, forms the high affinity interleukin-1 receptor complex. Signaling involves the recruitment of adapter molecules such as MYD88, IRAK1 or IRAK4. In turn, mediates the activation of NF-kappa-B and the three MAPK pathways p38, p42/p44 and JNK pathways. Within the cell, acts as an alarmin and cell death results in its liberation in the extracellular space after disruption of the cell membrane to induce inflammation and alert the host to injury or damage. In addition to its role as a danger signal, which occurs when the cytokine is passively released by cell necrosis, directly senses DNA damage and acts as signal for genotoxic stress without loss of cell integrity. The chain is Interleukin-1 alpha (IL1A) from Felis catus (Cat).